A 557-amino-acid polypeptide reads, in one-letter code: Urocanate hydratase (557 aa).

NAD(+) contacts are provided by residues 53-54 (GG), Gln131, 177-179 (GMG), Glu197, 243-244 (NA), 264-268 (QTSAH), 274-275 (YL), and Tyr323. Residue Cys411 is part of the active site. NAD(+) is bound at residue Gly493.

It belongs to the urocanase family. The cofactor is NAD(+).

The protein localises to the cytoplasm. It catalyses the reaction 4-imidazolone-5-propanoate = trans-urocanate + H2O. It participates in amino-acid degradation; L-histidine degradation into L-glutamate; N-formimidoyl-L-glutamate from L-histidine: step 2/3. Its function is as follows. Catalyzes the conversion of urocanate to 4-imidazolone-5-propionate. This Mesorhizobium japonicum (strain LMG 29417 / CECT 9101 / MAFF 303099) (Mesorhizobium loti (strain MAFF 303099)) protein is Urocanate hydratase.